The primary structure comprises 448 residues: Adenylosuccinate synthetase (448 aa).

Residues 36-42 (GDEGKGK) and 64-66 (GHT) each bind GTP. The active-site Proton acceptor is the Asp37. Residues Asp37 and Gly64 each contribute to the Mg(2+) site. Residues 37 to 40 (DEGK), 62 to 65 (NAGH), Thr154, Arg168, Asn246, Thr261, and Arg325 contribute to the IMP site. His65 functions as the Proton donor in the catalytic mechanism. 321-327 (VTTKRKR) contributes to the substrate binding site. Residues Arg327, 353–355 (KLD), and 436–438 (GVG) each bind GTP.

Belongs to the adenylosuccinate synthetase family. As to quaternary structure, homodimer. Mg(2+) serves as cofactor.

The protein localises to the cytoplasm. It catalyses the reaction IMP + L-aspartate + GTP = N(6)-(1,2-dicarboxyethyl)-AMP + GDP + phosphate + 2 H(+). It functions in the pathway purine metabolism; AMP biosynthesis via de novo pathway; AMP from IMP: step 1/2. Plays an important role in the de novo pathway and in the salvage pathway of purine nucleotide biosynthesis. Catalyzes the first committed step in the biosynthesis of AMP from IMP. The polypeptide is Adenylosuccinate synthetase (Drosophila pseudoobscura pseudoobscura (Fruit fly)).